The sequence spans 277 residues: Sulfur carrier protein FdhD (277 aa).

Cys123 functions as the Cysteine persulfide intermediate in the catalytic mechanism. 263-268 provides a ligand contact to Mo-bis(molybdopterin guanine dinucleotide); it reads FVRGNK.

The protein belongs to the FdhD family.

Its subcellular location is the cytoplasm. In terms of biological role, required for formate dehydrogenase (FDH) activity. Acts as a sulfur carrier protein that transfers sulfur from IscS to the molybdenum cofactor prior to its insertion into FDH. The sequence is that of Sulfur carrier protein FdhD from Corynebacterium efficiens (strain DSM 44549 / YS-314 / AJ 12310 / JCM 11189 / NBRC 100395).